A 1070-amino-acid polypeptide reads, in one-letter code: DNA double-strand break repair Rad50 ATPase (1070 aa).

ATP contacts are provided by residues arginine 12, 32 to 38 (NGSGKSS), and glutamine 142. Coiled-coil stretches lie at residues 227–257 (LEELNKKKEFAAARKGELDLRIAEYRERLQE), 369–403 (ECRTSIGAANKEIEGYRANIKQLEEENKRLREKAG), and 449–478 (LRELDSEMQSCRVAVSKGKSEIEALEKEIR). The Zinc-hook domain occupies 508 to 607 (LENLEDFNEL…KLNRLKEAKK (100 aa)). Cysteine 555 and cysteine 558 together coordinate Zn(2+). Coiled-coil stretches lie at residues 570-614 (TAEE…QAYD) and 878-908 (LKRLKELKEELKALENKRLYLEAVYNNADEL). Residue 969-974 (LLSGGE) coordinates ATP.

This sequence belongs to the SMC family. RAD50 subfamily. As to quaternary structure, homodimer. Forms a heterotetramer composed of two Mre11 subunits and two Rad50 subunits. It depends on Zn(2+) as a cofactor.

Its function is as follows. Part of the Rad50/Mre11 complex, which is involved in the early steps of DNA double-strand break (DSB) repair. The complex may facilitate opening of the processed DNA ends to aid in the recruitment of HerA and NurA. Rad50 controls the balance between DNA end bridging and DNA resection via ATP-dependent structural rearrangements of the Rad50/Mre11 complex. The protein is DNA double-strand break repair Rad50 ATPase of Methanosarcina mazei (strain ATCC BAA-159 / DSM 3647 / Goe1 / Go1 / JCM 11833 / OCM 88) (Methanosarcina frisia).